The chain runs to 386 residues: Meiotic chromosome segregation protein C1539.02 (386 aa).

Disordered regions lie at residues 1-28, 46-85, and 366-386; these read MNQD…SNKS, RALI…SSKQ, and DIHE…KTKG. The span at 15–28 shows a compositional bias: polar residues; that stretch reads AETSQLKNFSSNKS.

The protein localises to the nucleus. Functionally, required for meiotic chromosome segregation. This is Meiotic chromosome segregation protein C1539.02 from Schizosaccharomyces pombe (strain 972 / ATCC 24843) (Fission yeast).